The primary structure comprises 100 residues: Small cysteine and glycine repeat-containing protein 3 (100 aa).

Residues 4-82 (CGCGSCGGCG…RRTCRSCGCG (79 aa)) are 13 X 2 AA repeats of CG.

The protein belongs to the KRTAP type 28 family.

In the hair cortex, hair keratin intermediate filaments are embedded in an interfilamentous matrix, consisting of hair keratin-associated proteins (KRTAP), which are essential for the formation of a rigid and resistant hair shaft through their extensive disulfide bond cross-linking with abundant cysteine residues of hair keratins. The matrix proteins include the high-sulfur and high-glycine-tyrosine keratins. The sequence is that of Small cysteine and glycine repeat-containing protein 3 from Homo sapiens (Human).